Reading from the N-terminus, the 373-residue chain is P2Y purinoceptor 1 (373 aa).

Topologically, residues 1–51 (MTEVLWPAAPNGTDAAFLASPGFHWGNSTATSTAAAAAPFRCALTKTGFQF) are extracellular. Residues N11 and N27 are each glycosylated (N-linked (GlcNAc...) asparagine). 2 disulfides stabilise this stretch: C42–C296 and C124–C202. An ADP-binding site is contributed by K46. The helical transmembrane segment at 52–74 (YYLPAVYIVVFIIGFLGNSIAIW) threads the bilayer. Residues 75–87 (MFVFHMKPWSGIS) are Cytoplasmic-facing. A helical transmembrane segment spans residues 88-109 (VYMFNLALADFLYVLTLPALIF). Topologically, residues 110-125 (YYFNKTNWIFGDAMCK) are extracellular. An N-linked (GlcNAc...) asparagine glycan is attached at N113. A helical membrane pass occupies residues 126–147 (LQRFIFHVNLYGSILFLTCISA). Topologically, residues 148–166 (HRYSGVVYPLKSLGRLKKK) are cytoplasmic. Residues 167–188 (NAVYISVLVWLIVVVAISPILF) form a helical membrane-spanning segment. Residues 189-214 (YSGTGIRKNKTITCYDTTSDEYLRSY) are Extracellular-facing. An N-linked (GlcNAc...) asparagine glycan is attached at N197. Position 203–205 (203–205 (YDT)) interacts with ADP. A helical transmembrane segment spans residues 215 to 237 (FIYSMCTTVAMFCVPLVLILGCY). Over 238–260 (GLIVRALIYKDLDNSPLRRKSIY) the chain is Cytoplasmic. A helical membrane pass occupies residues 261–284 (LVIIVLTVFAVSYIPFHVMKTMNL). ADP contacts are provided by residues 283–287 (NLRAR), 303–306 (YATY), and R310. The Extracellular segment spans residues 285–303 (RARLDFQTPEMCTFNDRVY). The chain crosses the membrane as a helical span at residues 304 to 325 (ATYQVTRGLASLNSCVDPILYF). Residues 326-373 (LAGDTFRRRLSRATRKASRRSEANLQSKSEDMTLNILSEFKQNGDTSL) are Cytoplasmic-facing.

This sequence belongs to the G-protein coupled receptor 1 family.

It localises to the cell membrane. Functionally, receptor for extracellular adenine nucleotides such as ADP. In platelets, binding to ADP leads to mobilization of intracellular calcium ions via activation of phospholipase C, a change in platelet shape, and ultimately platelet aggregation. This chain is P2Y purinoceptor 1 (P2RY1), found in Cavia porcellus (Guinea pig).